A 295-amino-acid polypeptide reads, in one-letter code: ATP synthase subunit a (295 aa).

A run of 7 helical transmembrane segments spans residues 41-61 (KWSA…WLGF), 101-121 (YLTI…IPVA), 129-149 (IALP…VGIR), 161-181 (LVPA…IEFV), 191-211 (LAIR…VFAL), 222-242 (FVFG…ELMI), and 244-264 (VLQA…AISS).

This sequence belongs to the ATPase A chain family. In terms of assembly, F-type ATPases have 2 components, CF(1) - the catalytic core - and CF(0) - the membrane proton channel. CF(1) has five subunits: alpha(3), beta(3), gamma(1), delta(1), epsilon(1). CF(0) has three main subunits: a(1), b(2) and c(9-12). The alpha and beta chains form an alternating ring which encloses part of the gamma chain. CF(1) is attached to CF(0) by a central stalk formed by the gamma and epsilon chains, while a peripheral stalk is formed by the delta and b chains.

It is found in the cell membrane. Key component of the proton channel; it plays a direct role in the translocation of protons across the membrane. In Parafrankia sp. (strain EAN1pec), this protein is ATP synthase subunit a.